Here is a 458-residue protein sequence, read N- to C-terminus: Argininosuccinate lyase (458 aa).

Belongs to the lyase 1 family. Argininosuccinate lyase subfamily.

The protein resides in the cytoplasm. The enzyme catalyses 2-(N(omega)-L-arginino)succinate = fumarate + L-arginine. The protein operates within amino-acid biosynthesis; L-arginine biosynthesis; L-arginine from L-ornithine and carbamoyl phosphate: step 3/3. This chain is Argininosuccinate lyase, found in Hydrogenobaculum sp. (strain Y04AAS1).